The following is a 236-amino-acid chain: Small ribosomal subunit protein eS6 (236 aa).

S232 and S233 each carry phosphoserine.

Belongs to the eukaryotic ribosomal protein eS6 family. Phosphorylated.

This chain is Small ribosomal subunit protein eS6 (RPS6A), found in Candida glabrata (strain ATCC 2001 / BCRC 20586 / JCM 3761 / NBRC 0622 / NRRL Y-65 / CBS 138) (Yeast).